We begin with the raw amino-acid sequence, 764 residues long: Thyrotropin receptor (764 aa).

A signal peptide spans 1 to 20 (MRPADLLQLVLLLDLPRDLG). The Extracellular portion of the chain corresponds to 21–413 (GMGCSSPPCE…EFNPCEDIMG (393 aa)). Cys-31 and Cys-41 are disulfide-bonded. 3 N-linked (GlcNAc...) asparagine glycosylation sites follow: Asn-77, Asn-99, and Asn-113. LRR repeat units lie at residues 100 to 124 (LSKV…ALKE), 125 to 150 (LPLL…VYST), 152 to 174 (IFFI…AFQG), 176 to 199 (CNET…AFNG), 200 to 223 (TKLD…AFGG), 227 to 248 (GPSL…GLEH), and 250 to 271 (KELI…SFLH). Asn-177 and Asn-198 each carry an N-linked (GlcNAc...) asparagine glycan. The N-linked (GlcNAc...) asparagine glycan is linked to Asn-302. Sulfotyrosine is present on Tyr-385. Residues 414–441 (YKFLRIVVWFVSLLALLGNVFVLLILLT) form a helical membrane-spanning segment. Topologically, residues 442–450 (SHYKLNVPR) are cytoplasmic. Residues 451-473 (FLMCNLAFADFCMGMYLLLIASV) form a helical membrane-spanning segment. Topologically, residues 474–494 (DLYTHSEYYNHAIDWQTGPGC) are extracellular. Cysteines 494 and 569 form a disulfide. The chain crosses the membrane as a helical span at residues 495 to 517 (NTAGFFTVFASELSVYTLTVITL). Over 518–537 (ERWYAITFAMRLDRKIRLRH) the chain is Cytoplasmic. Residues 538–560 (ACAIMVGGWVCCFLLALLPLVGI) form a helical membrane-spanning segment. Over 561–580 (SSYAKVSICLPMDTETPLAL) the chain is Extracellular. The helical transmembrane segment at 581 to 602 (AYIVFVLTLNIVAFVIVCCCYV) threads the bilayer. At 603–625 (KIYITVRNPQYNPGDKDTKIAKR) the chain is on the cytoplasmic side. Residues 626 to 649 (MAVLIFTDFICMAPISFYALSAIL) traverse the membrane as a helical segment. At 650-660 (NKPLITVSNSK) the chain is on the extracellular side. A helical membrane pass occupies residues 661 to 682 (ILLVLFYPLNSCANPFLYAIFT). Topologically, residues 683–764 (KAFQRDVFIL…ISEEYMQTVL (82 aa)) are cytoplasmic. The PDZ-binding motif lies at 762 to 764 (TVL).

This sequence belongs to the G-protein coupled receptor 1 family. FSH/LSH/TSH subfamily. In terms of assembly, interacts with heterodimer GPHA2:GPHB5; this interaction stimulates cAMP production. Interacts (via the PDZ-binding motif) with SCRIB; regulates TSHR trafficking and function. Post-translationally, glycosylated. In terms of processing, sulfated. Sulfation on Tyr-385 plays a role in thyrotropin receptor binding and activation. Expressed in thyroide cells (at protein level). Expressed in the thyroid.

It localises to the cell membrane. It is found in the basolateral cell membrane. Receptor for the thyroid-stimulating hormone (TSH) or thyrotropin. Also acts as a receptor for the heterodimeric glycoprotein hormone (GPHA2:GPHB5) or thyrostimulin. The activity of this receptor is mediated by G proteins which activate adenylate cyclase. Plays a central role in controlling thyroid cell metabolism. The polypeptide is Thyrotropin receptor (TSHR) (Homo sapiens (Human)).